We begin with the raw amino-acid sequence, 346 residues long: Homeobox protein ceh-22 (346 aa).

Disordered stretches follow at residues 1-68 (MFNV…QSAL) and 135-190 (LPDQ…RKKR). Low complexity predominate over residues 9-24 (AATPSIASVSSVASPS). The segment covering 25–44 (EQHGLSTSVGVGVNDTTSRT) has biased composition (polar residues). The segment covering 49–67 (AASSASSASAAPQQQSQSA) has biased composition (low complexity). A compositionally biased stretch (polar residues) spans 147–156 (LDNSNTSNGN). The segment covering 166-182 (EDEDEILEDEENDEEDD) has biased composition (acidic residues). The homeobox DNA-binding region spans 189 to 248 (KRKRRVLFTKAQTYELERRFRSQKYLSAPEREALAMQIRLTPTQVKIWFQNHRYKTKKSH).

The protein belongs to the NK-2 homeobox family.

It is found in the nucleus. Its function is as follows. Involved in combinatorial activation of gene expression in pharyngeal muscle. Specifically binds a site necessary for activity of the B subelement of myo-2 enhancer. In terms of biological role, regulates distal tip cell fate. The polypeptide is Homeobox protein ceh-22 (ceh-22) (Caenorhabditis elegans).